We begin with the raw amino-acid sequence, 828 residues long: Glycerol-3-phosphate acyltransferase (828 aa).

The short motif at 304-309 (CHRSHM) is the HXXXXD motif element. Residues 802–828 (SMPAETSNQPEAPETPETPEPEGKTES) are disordered.

This sequence belongs to the GPAT/DAPAT family.

Its subcellular location is the cell inner membrane. The catalysed reaction is sn-glycerol 3-phosphate + an acyl-CoA = a 1-acyl-sn-glycero-3-phosphate + CoA. The protein operates within phospholipid metabolism; CDP-diacylglycerol biosynthesis; CDP-diacylglycerol from sn-glycerol 3-phosphate: step 1/3. The sequence is that of Glycerol-3-phosphate acyltransferase from Yersinia pseudotuberculosis serotype O:3 (strain YPIII).